The following is a 187-amino-acid chain: Cytokinin riboside 5'-monophosphate phosphoribohydrolase (187 aa).

Residues E80, 98–99, 115–121, and T127 each bind substrate; these read RK and GVGTLDE.

It belongs to the LOG family.

The enzyme catalyses N(6)-(dimethylallyl)adenosine 5'-phosphate + H2O = N(6)-dimethylallyladenine + D-ribose 5-phosphate. It catalyses the reaction 9-ribosyl-trans-zeatin 5'-phosphate + H2O = trans-zeatin + D-ribose 5-phosphate. Functionally, catalyzes the hydrolytic removal of ribose 5'-monophosphate from nitrogen N6-modified adenosines, the final step of bioactive cytokinin synthesis. In Mycobacterium marinum (strain ATCC BAA-535 / M), this protein is Cytokinin riboside 5'-monophosphate phosphoribohydrolase.